We begin with the raw amino-acid sequence, 606 residues long: Phosphoenolpyruvate carboxykinase [GTP] (606 aa).

Residues Arg79 and 218–220 (YGG) each bind substrate. Mn(2+) is bound by residues Lys227 and His247. Ser269 is a substrate binding site. 270-275 (ACGKTN) lines the GTP pocket. Cys271 is a catalytic residue. A Mn(2+)-binding site is contributed by Asp294. Residue 384 to 386 (NSR) coordinates substrate. Residues Arg386, Arg417, and 512-515 (FGEN) contribute to the GTP site.

Belongs to the phosphoenolpyruvate carboxykinase [GTP] family. As to quaternary structure, monomer. The cofactor is Mn(2+).

It localises to the cytoplasm. The enzyme catalyses oxaloacetate + GTP = phosphoenolpyruvate + GDP + CO2. The protein operates within carbohydrate biosynthesis; gluconeogenesis. Functionally, catalyzes the conversion of oxaloacetate (OAA) to phosphoenolpyruvate (PEP), the rate-limiting step in the metabolic pathway that produces glucose from lactate and other precursors derived from the citric acid cycle. The polypeptide is Phosphoenolpyruvate carboxykinase [GTP] (Corynebacterium jeikeium (strain K411)).